Reading from the N-terminus, the 444-residue chain is Mitogen-activated protein kinase mpk-1 (444 aa).

Polar residues-rich tracts occupy residues 1-17 (MPTW…TTRN) and 24-56 (GHPQ…HVRQ). A disordered region spans residues 1–56 (MPTWIPNNLCAQPTTRNAKPPSNGHPQATQQQSAPGSLAYRNSSNIPNGATNHVRQ). The Protein kinase domain maps to 96–384 (YVNLSYIGEG…IEQALAHPYL (289 aa)). ATP contacts are provided by residues 102–110 (IGEGAYGMV) and K125. Residue D220 is the Proton acceptor of the active site. A Phosphothreonine modification is found at T256. Positions 256–258 (TEY) match the TXY motif. At Y258 the chain carries Phosphotyrosine.

This sequence belongs to the protein kinase superfamily. CMGC Ser/Thr protein kinase family. MAP kinase subfamily. Isoform a interacts with gck-1 (via N-terminus). It depends on Mg(2+) as a cofactor. Post-translationally, isoform a is phosphorylated at the pachytene stage during oogenesis and is negatively regulated by gck-1. Isoform b is phosphorylated in proximal oocytes. Expressed in cells lining the rectum. Isoform a is expressed in nervous system, body wall muscles and posterior intestine. Isoform b expression may be restricted to germline.

It catalyses the reaction L-seryl-[protein] + ATP = O-phospho-L-seryl-[protein] + ADP + H(+). It carries out the reaction L-threonyl-[protein] + ATP = O-phospho-L-threonyl-[protein] + ADP + H(+). With respect to regulation, activated by dual phosphorylation at Thr-256 and Tyr-258. May be inactivated by lip-1-mediated dephosphorylation. Functions in let-60 Ras signaling pathway; acts downstream of lin-45 raf kinase, but before the lin-1 gene product in controlling vulval cell differentiation. Plays a negative role in proximal germline proliferation in the mitotic zone. Required for progression of developing oocytes through the pachytene stage, perhaps acting after efl-1/dpl-1-mediated gene activation and before gld-1 down-regulation. May play a role in global X chromosome reactivation or be indirectly required for progression of germ cells through meiosis to the point where X reactivation occurs. In oocytes, inhibits the activity of the chloride channel clh-3, likely by activating gck-3. Plays a role in response to M.nematophilum-mediated bacterial infection by promoting tail swelling and preventing constipation. Involved in fluid homeostasis. In addition, involved in the up-regulation of lysozyme ilys-3 expression in the intestine in responses to M.nematophilum-mediated bacterial infection. By phosphorylating transcription factor skn-1 (isoform c) may play a role in increasing life span downstream of lin-45, let-60 and mek-2. By up-regulating cep-1 and down-regulating gld-1 expression in the late pachytene stage, plays a role in germline apoptosis in response to DNA damage. Regulates egl-1 expression in response to DNA damage, probably upstream of cep-1. In terms of biological role, suppresses germline tumor formation by preventing the dedifferentiation of secondary spermatocytes probably upstream of rskn-1. The sequence is that of Mitogen-activated protein kinase mpk-1 (mpk-1) from Caenorhabditis elegans.